The chain runs to 815 residues: (-)-kolavenyl diphosphate synthase TPS28, chloroplastic (815 aa).

The transit peptide at 1 to 51 (MFMSSSSSSHARRPQLSSFSYLHPPLPFPGLSFFNTRDKRVNFDSTRIICI) directs the protein to the chloroplast. Lys-247 contributes to the substrate binding site. Residues Asp-379 and Asp-381 each coordinate Mg(2+). Positions 379–382 (DIDD) match the DXDD motif motif. Lys-465 lines the substrate pocket.

Belongs to the terpene synthase family. Tpsc subfamily. The cofactor is Mg(2+).

It localises to the plastid. The protein resides in the chloroplast. The catalysed reaction is (2E,6E,10E)-geranylgeranyl diphosphate = (-)-kolavenyl diphosphate. Its activity is regulated as follows. Inhibited by high concentrations of magnesium. Its function is as follows. Diterpene synthase that catalyzes the formation of (-)-kolavenyl diphosphate from geranylgeranyl diphosphate (GGPP). The protein is (-)-kolavenyl diphosphate synthase TPS28, chloroplastic of Tripterygium wilfordii (Thunder God vine).